Reading from the N-terminus, the 804-residue chain is Lon protease (804 aa).

A disordered region spans residues 1–23; the sequence is MSADSENETSESSPAGEATASTS. Positions 30 to 224 constitute a Lon N-terminal domain; that stretch reads LILLPVRNAV…KVLDAVAGRI (195 aa). 376-383 provides a ligand contact to ATP; sequence GPPGVGKT. The region spanning 612–793 is the Lon proteolytic domain; sequence TSLPGVVTGL…DDAVREIIED (182 aa). Active-site residues include serine 699 and lysine 742.

It belongs to the peptidase S16 family. Homohexamer. Organized in a ring with a central cavity.

The protein localises to the cytoplasm. The catalysed reaction is Hydrolysis of proteins in presence of ATP.. In terms of biological role, ATP-dependent serine protease that mediates the selective degradation of mutant and abnormal proteins as well as certain short-lived regulatory proteins. Required for cellular homeostasis and for survival from DNA damage and developmental changes induced by stress. Degrades polypeptides processively to yield small peptide fragments that are 5 to 10 amino acids long. Binds to DNA in a double-stranded, site-specific manner. The chain is Lon protease from Paraburkholderia phytofirmans (strain DSM 17436 / LMG 22146 / PsJN) (Burkholderia phytofirmans).